The primary structure comprises 493 residues: MLAATVLTLALLGNAHACSKGTSHEAGIVCRITKPALLVLNHETAKVIQTAFQRASYPDITGEKAMMLLGQVKYGLHNIQISHLSIASSQVELVEAKSIDVSIQNVSVVFKGTLKYGYTTAWWLGIDQSIDFEIDSAIDLQINTQLTCDSGRVRTDAPDCYLSFHKLLLHLQGEREPGWIKQLFTNFISFTLKLVLKGQICKEINVISNIMADFVQTRAASILSDGDIGVDISLTGDPVITASYLESHHKGHFIYKNVSEDLPLPTFSPTLLGDSRMLYFWFSERVFHSLAKVAFQDGRLMLSLMGDEFKAVLETWGFNTNQEIFQEVVGGFPSQAQVTVHCLKMPKISCQNKGVVVNSSVMVKFLFPRPDQQHSVAYTFEEDIVTTVQASYSKKKLFLSLLDFQITPKTVSNLTESSSESVQSFLQSMITAVGIPEVMSRLEVVFTALMNSKGVSLFDIINPEIITRDGFLLLQMDFGFPEHLLVDFLQSLS.

Residues 1-17 (MLAATVLTLALLGNAHA) form the signal peptide. N-linked (GlcNAc...) (complex) asparagine glycosylation is present at Asn105. Cys160 and Cys201 form a disulfide bridge. N-linked (GlcNAc...) asparagine glycosylation is found at Asn257, Asn358, and Asn413.

This sequence belongs to the BPI/LBP/Plunc superfamily. BPI/LBP family. Expressed by the liver and secreted in plasma.

It is found in the secreted. It carries out the reaction cholesteryl (9Z-octadecenoate)(in) = cholesteryl (9Z-octadecenoate)(out). It catalyses the reaction 1,2,3-tri-(9Z-octadecenoyl)-glycerol(in) = 1,2,3-tri-(9Z-octadecenoyl)-glycerol(out). The catalysed reaction is cholesteryl (9Z,12Z)-octadecadienoate(in) = cholesteryl (9Z,12Z)-octadecadienoate(out). Involved in the transfer of neutral lipids, including cholesteryl ester and triglyceride, among lipoprotein particles. Allows the net movement of cholesteryl ester from high density lipoproteins/HDL to triglyceride-rich very low density lipoproteins/VLDL, and the equimolar transport of triglyceride from VLDL to HDL. Regulates the reverse cholesterol transport, by which excess cholesterol is removed from peripheral tissues and returned to the liver for elimination. This Homo sapiens (Human) protein is Cholesteryl ester transfer protein.